The primary structure comprises 120 residues: NAD(P)H-quinone oxidoreductase subunit 3 (120 aa).

Helical transmembrane passes span F10–I30, M64–V84, and L89–A109.

The protein belongs to the complex I subunit 3 family. NDH-1 can be composed of about 15 different subunits; different subcomplexes with different compositions have been identified which probably have different functions.

Its subcellular location is the cellular thylakoid membrane. The enzyme catalyses a plastoquinone + NADH + (n+1) H(+)(in) = a plastoquinol + NAD(+) + n H(+)(out). It carries out the reaction a plastoquinone + NADPH + (n+1) H(+)(in) = a plastoquinol + NADP(+) + n H(+)(out). In terms of biological role, NDH-1 shuttles electrons from an unknown electron donor, via FMN and iron-sulfur (Fe-S) centers, to quinones in the respiratory and/or the photosynthetic chain. The immediate electron acceptor for the enzyme in this species is believed to be plastoquinone. Couples the redox reaction to proton translocation, and thus conserves the redox energy in a proton gradient. Cyanobacterial NDH-1 also plays a role in inorganic carbon-concentration. This chain is NAD(P)H-quinone oxidoreductase subunit 3, found in Prochlorococcus marinus (strain MIT 9301).